The primary structure comprises 504 residues: MFGDRQRPMVLVLGLGESGLAIARWCARHGCRLRVADTCETPPNLAALTAAGVDFEFVGGAFSPALVDGGIELVALSPGLSPLAEDLAPLVAAARERGIPVWGELEFFAQALAALGANGYAPKVIAITGTNGKTTTTSLAGLLCERAGKKVAVAGNISPAMLDKLTEAIDAAALPDVWVLELSSFQLDTAHTFAPDAATILNITQDHLDWHGGFAAYAAAKGRVFGPRTVRVLNRDDAEVMRFAPPAAAADAPRAVTFGLNEPAADGDYGLLRENGIAWLVEAIDRDGADAPAAPSRRRKQEAANPPDIALKRLMPADALRIRGLHNAANALAAYALARAIGLPAAPLLHGLREYRGEPHRVEVIATLDGVDYVDDSKGTNVGATVAALDGLAQRAVLIAGGDGKGQDFEPLAAPVARWCRAVMLIGRDAPALREALADTGVPLADHATLEAAVRAASALAQPGDAVLLSPACASLDMFRNYAHRADVFRSAVEDIALEKGTTL.

129-135 (GTNGKTT) is a binding site for ATP.

This sequence belongs to the MurCDEF family.

The protein resides in the cytoplasm. It catalyses the reaction UDP-N-acetyl-alpha-D-muramoyl-L-alanine + D-glutamate + ATP = UDP-N-acetyl-alpha-D-muramoyl-L-alanyl-D-glutamate + ADP + phosphate + H(+). It participates in cell wall biogenesis; peptidoglycan biosynthesis. In terms of biological role, cell wall formation. Catalyzes the addition of glutamate to the nucleotide precursor UDP-N-acetylmuramoyl-L-alanine (UMA). The protein is UDP-N-acetylmuramoylalanine--D-glutamate ligase of Burkholderia mallei (strain ATCC 23344).